The primary structure comprises 119 residues: Neuropeptide B (119 aa).

A signal peptide spans 1–21 (MVRCRTLVAAALALLLTPALA). Residues 53 to 119 (SESPALRVGT…SLHKAECQSA (67 aa)) constitute a propeptide that is removed on maturation.

Belongs to the neuropeptide B/W family. In terms of tissue distribution, detected in a variety of tissues. High levels are found in the lymphoid organs, central nervous system, mammary gland and uterus.

It is found in the secreted. May be involved in the regulation of feeding, neuroendocrine system, memory and learning. May be involved in the afferent pain pathway. The sequence is that of Neuropeptide B (Npb) from Rattus norvegicus (Rat).